The following is a 288-amino-acid chain: ATP synthase gamma chain (288 aa).

This sequence belongs to the ATPase gamma chain family. As to quaternary structure, F-type ATPases have 2 components, CF(1) - the catalytic core - and CF(0) - the membrane proton channel. CF(1) has five subunits: alpha(3), beta(3), gamma(1), delta(1), epsilon(1). CF(0) has three main subunits: a, b and c.

The protein localises to the cell inner membrane. Its function is as follows. Produces ATP from ADP in the presence of a proton gradient across the membrane. The gamma chain is believed to be important in regulating ATPase activity and the flow of protons through the CF(0) complex. In Aeromonas hydrophila subsp. hydrophila (strain ATCC 7966 / DSM 30187 / BCRC 13018 / CCUG 14551 / JCM 1027 / KCTC 2358 / NCIMB 9240 / NCTC 8049), this protein is ATP synthase gamma chain.